The sequence spans 22 residues: Phospholipase A2 (22 aa).

The protein belongs to the phospholipase A2 family. Ca(2+) serves as cofactor.

It is found in the secreted. The catalysed reaction is a 1,2-diacyl-sn-glycero-3-phosphocholine + H2O = a 1-acyl-sn-glycero-3-phosphocholine + a fatty acid + H(+). Its function is as follows. PA2 catalyzes the calcium-dependent hydrolysis of the 2-acyl groups in 3-sn-phosphoglycerides. The sequence is that of Phospholipase A2 from Struthio camelus (Common ostrich).